A 91-amino-acid chain; its full sequence is Non-structural protein 3a (91 aa).

An N-terminal signal peptide occupies residues 1–19 (MVSFNATAILLVLVANAFS).

The sequence is that of Non-structural protein 3a from Tylonycteris pachypus (Lesser bamboo bat).